Here is a 222-residue protein sequence, read N- to C-terminus: Cysteine protease inhibitor 1 (222 aa).

Residues 1-26 (MKSINILSFLLLSSTLSLVAFARSFT) form the signal peptide. The propeptide occupies 27–42 (SENPIVLPTTCHDDDN). Residues 29–34 (NPIVLP) carry the Vacuolar targeting signal motif. 2 disulfides stabilise this stretch: Cys84-Cys136 and Cys185-Cys191.

Belongs to the protease inhibitor I3 (leguminous Kunitz-type inhibitor) family. In terms of tissue distribution, tubers, leaves.

Its subcellular location is the vacuole. Functionally, potent inhibitor of cathepsin l (cysteine protease). Does not inhibit trypsin or chymotrypsin (serine proteases). May protect the plant by inhibiting proteases of invading organisms. The sequence is that of Cysteine protease inhibitor 1 from Solanum tuberosum (Potato).